Reading from the N-terminus, the 283-residue chain is Pantothenate synthetase (283 aa).

An ATP-binding site is contributed by M30–H37. H37 serves as the catalytic Proton donor. Q61 provides a ligand contact to (R)-pantoate. Residue Q61 participates in beta-alanine binding. G147–D150 contacts ATP. (R)-pantoate is bound at residue Q153. ATP is bound by residues V176 and M184–R187.

The protein belongs to the pantothenate synthetase family. As to quaternary structure, homodimer.

Its subcellular location is the cytoplasm. The enzyme catalyses (R)-pantoate + beta-alanine + ATP = (R)-pantothenate + AMP + diphosphate + H(+). Its pathway is cofactor biosynthesis; (R)-pantothenate biosynthesis; (R)-pantothenate from (R)-pantoate and beta-alanine: step 1/1. Functionally, catalyzes the condensation of pantoate with beta-alanine in an ATP-dependent reaction via a pantoyl-adenylate intermediate. This Syntrophobacter fumaroxidans (strain DSM 10017 / MPOB) protein is Pantothenate synthetase.